The primary structure comprises 338 residues: Lipoate-protein ligase A (338 aa).

In terms of domain architecture, BPL/LPL catalytic spans P29–V216. ATP-binding positions include R71, G76 to F79, and K134. Position 134 (K134) interacts with (R)-lipoate.

Belongs to the LplA family. In terms of assembly, monomer.

The protein resides in the cytoplasm. The catalysed reaction is L-lysyl-[lipoyl-carrier protein] + (R)-lipoate + ATP = N(6)-[(R)-lipoyl]-L-lysyl-[lipoyl-carrier protein] + AMP + diphosphate + H(+). It functions in the pathway protein modification; protein lipoylation via exogenous pathway; protein N(6)-(lipoyl)lysine from lipoate: step 1/2. Its pathway is protein modification; protein lipoylation via exogenous pathway; protein N(6)-(lipoyl)lysine from lipoate: step 2/2. Functionally, catalyzes both the ATP-dependent activation of exogenously supplied lipoate to lipoyl-AMP and the transfer of the activated lipoyl onto the lipoyl domains of lipoate-dependent enzymes. In Salmonella arizonae (strain ATCC BAA-731 / CDC346-86 / RSK2980), this protein is Lipoate-protein ligase A.